Reading from the N-terminus, the 333-residue chain is L-lactate dehydrogenase B chain (333 aa).

NAD(+) contacts are provided by residues 29-57 (GQVG…LEDK) and Arg99. Residues Arg106, Asn138, and Arg169 each coordinate substrate. NAD(+) is bound at residue Asn138. The Proton acceptor role is filled by His193. Residue Thr248 participates in substrate binding.

This sequence belongs to the LDH/MDH superfamily. LDH family. In terms of assembly, homotetramer.

Its subcellular location is the cytoplasm. The enzyme catalyses (S)-lactate + NAD(+) = pyruvate + NADH + H(+). It participates in fermentation; pyruvate fermentation to lactate; (S)-lactate from pyruvate: step 1/1. Functionally, interconverts simultaneously and stereospecifically pyruvate and lactate with concomitant interconversion of NADH and NAD(+). The chain is L-lactate dehydrogenase B chain (LDHB) from Caiman crocodilus apaporiensis (Rio Apaporis caiman).